Here is a 148-residue protein sequence, read N- to C-terminus: Large ribosomal subunit protein bL9 (148 aa).

The protein belongs to the bacterial ribosomal protein bL9 family.

Binds to the 23S rRNA. The protein is Large ribosomal subunit protein bL9 of Geobacter metallireducens (strain ATCC 53774 / DSM 7210 / GS-15).